Here is a 134-residue protein sequence, read N- to C-terminus: MKHADLSQRQLRVGEQVRHALAHMLQRGILLDDALKDVVFSVSEVRMSPDLKIATCFVSFLNTVDDISRATLIKVLNKHSRFIRGEISSSLRQMKYMPELRFRLDNSFDNFSKIDALLRLPEVARDLHHHKPED.

The protein belongs to the RbfA family. Monomer. Binds 30S ribosomal subunits, but not 50S ribosomal subunits or 70S ribosomes.

It is found in the cytoplasm. Its function is as follows. One of several proteins that assist in the late maturation steps of the functional core of the 30S ribosomal subunit. Associates with free 30S ribosomal subunits (but not with 30S subunits that are part of 70S ribosomes or polysomes). Required for efficient processing of 16S rRNA. May interact with the 5'-terminal helix region of 16S rRNA. This chain is Ribosome-binding factor A, found in Bartonella bacilliformis (strain ATCC 35685 / KC583 / Herrer 020/F12,63).